Reading from the N-terminus, the 141-residue chain is MSQPLFTATVSAVGGREGKVISSDRVLELDVAMPGTPRAKKLEKATNPEQLFAAGYAACFDSALQLVARTERVKVETEVTANVSLLKDEADQGYKLGVTLQVKGEGVSASELEALVKKAHGVCPYSKATSGNIDVTLEVAE.

This sequence belongs to the OsmC/Ohr family.

Its function is as follows. Involved in organic hydroperoxide resistance. The sequence is that of Organic hydroperoxide resistance protein OhrA (ohrA) from Bacillus subtilis (strain 168).